The chain runs to 348 residues: UDP-3-O-acylglucosamine N-acyltransferase (348 aa).

The active-site Proton acceptor is the H248.

Belongs to the transferase hexapeptide repeat family. LpxD subfamily. In terms of assembly, homotrimer.

It catalyses the reaction a UDP-3-O-[(3R)-3-hydroxyacyl]-alpha-D-glucosamine + a (3R)-hydroxyacyl-[ACP] = a UDP-2-N,3-O-bis[(3R)-3-hydroxyacyl]-alpha-D-glucosamine + holo-[ACP] + H(+). It participates in bacterial outer membrane biogenesis; LPS lipid A biosynthesis. Its function is as follows. Catalyzes the N-acylation of UDP-3-O-acylglucosamine using 3-hydroxyacyl-ACP as the acyl donor. Is involved in the biosynthesis of lipid A, a phosphorylated glycolipid that anchors the lipopolysaccharide to the outer membrane of the cell. In Rippkaea orientalis (strain PCC 8801 / RF-1) (Cyanothece sp. (strain PCC 8801)), this protein is UDP-3-O-acylglucosamine N-acyltransferase.